The chain runs to 964 residues: Phosphoenolpyruvate carboxylase (964 aa).

S11 is modified (phosphoserine). Active-site residues include H172 and K600.

It belongs to the PEPCase type 1 family. In terms of assembly, homotetramer. The cofactor is Mg(2+).

Its subcellular location is the cytoplasm. The enzyme catalyses oxaloacetate + phosphate = phosphoenolpyruvate + hydrogencarbonate. It functions in the pathway photosynthesis; C4 acid pathway. With respect to regulation, by light-reversible phosphorylation. Its function is as follows. Through the carboxylation of phosphoenolpyruvate (PEP) it forms oxaloacetate, a four-carbon dicarboxylic acid source for the tricarboxylic acid cycle. This chain is Phosphoenolpyruvate carboxylase (PPC), found in Nicotiana tabacum (Common tobacco).